Reading from the N-terminus, the 288-residue chain is Polyisoprenoid diphosphate/phosphate phosphohydrolase PLPP6 (288 aa).

The tract at residues 1-82 (MPSPKARSGS…STGGGGQQLP (82 aa)) is disordered. Residues 1-127 (MPSPKARSGS…EDSSWGSVRP (127 aa)) lie on the Cytoplasmic side of the membrane. Residues 128–148 (LMKLIEVSGHGIPWLAGAAYC) form a helical membrane-spanning segment. Residues 149–161 (LYKSDSPAGQEVM) are Lumenal-facing. Residues 162-182 (LNLLMALVLDVVLVGVLKAVV) traverse the membrane as a helical segment. The interval 179–187 (KAVVRRRRP) is phosphatase sequence motif I. At 183 to 223 (RRRRPAHNRMDMFATFSVDSYSFPSGHATRAAMCARFLLNH) the chain is on the cytoplasmic side. The segment at 206–209 (PSGH) is phosphatase sequence motif II. Histidine 209 acts as the Proton donors in catalysis. A helical transmembrane segment spans residues 224 to 244 (LVLAAPLRVLVLLWATIVGFS). The phosphatase sequence motif III stretch occupies residues 244-255 (SRVLLGRHNVTD). At 245-255 (RVLLGRHNVTD) the chain is on the lumenal side. Catalysis depends on histidine 251, which acts as the Nucleophile. A helical transmembrane segment spans residues 256 to 276 (VAFGFFMGYWQYNLVEMLWLS). Residues 277 to 288 (PVMLQSAIGQLH) lie on the Cytoplasmic side of the membrane.

The protein belongs to the PA-phosphatase related phosphoesterase family.

The protein resides in the endoplasmic reticulum membrane. It localises to the nucleus envelope. The protein localises to the nucleus inner membrane. The enzyme catalyses presqualene diphosphate + H2O = presqualene phosphate + phosphate + H(+). It catalyses the reaction presqualene phosphate + H2O = presqualene alcohol + phosphate. The catalysed reaction is (2E,6E)-farnesyl diphosphate + H2O = (2E,6E)-farnesyl phosphate + phosphate + H(+). It carries out the reaction (2E,6E)-farnesyl phosphate + H2O = (2E,6E)-farnesol + phosphate. The enzyme catalyses (2E,6E,10E)-geranylgeranyl diphosphate + H2O = (2E,6E,10E)-geranylgeranyl phosphate + phosphate + H(+). It catalyses the reaction (2E,6E,10E)-geranylgeranyl phosphate + H2O = (2E,6E,10E)-geranylgeraniol + phosphate. The catalysed reaction is (2E)-geranyl diphosphate + H2O = (2E)-geranyl phosphate + phosphate + H(+). It carries out the reaction (2E)-geranyl phosphate + H2O = (2E)-geraniol + phosphate. The enzyme catalyses 1,2-dihexadecanoyl-sn-glycero-3-phosphate + H2O = 1,2-dihexadecanoyl-sn-glycerol + phosphate. Its function is as follows. Magnesium-independent polyisoprenoid diphosphatase that catalyzes the sequential dephosphorylation of presqualene, farnesyl, geranyl and geranylgeranyl diphosphates. May regulate the biosynthesis of cholesterol and related sterols by dephosphorylating presqualene and farnesyl diphosphate, two key intermediates in this biosynthetic pathway. May also play a role in protein prenylation by acting on farnesyl diphosphate and its derivative geranylgeranyl diphosphate, two precursors for the addition of isoprenoid anchors to membrane proteins. Has a lower activity towards phosphatidic acid (PA), but through phosphatidic acid dephosphorylation may participate in the biosynthesis of phospholipids and triacylglycerols. May also act on ceramide-1-P, lysophosphatidic acid (LPA) and sphing-4-enine 1-phosphate/sphingosine-1-phosphate. This is Polyisoprenoid diphosphate/phosphate phosphohydrolase PLPP6 (plpp6) from Danio rerio (Zebrafish).